The following is a 71-amino-acid chain: UPF0435 protein BLi00816/BL03111 (71 aa).

This sequence belongs to the UPF0435 family.

This chain is UPF0435 protein BLi00816/BL03111, found in Bacillus licheniformis (strain ATCC 14580 / DSM 13 / JCM 2505 / CCUG 7422 / NBRC 12200 / NCIMB 9375 / NCTC 10341 / NRRL NRS-1264 / Gibson 46).